A 131-amino-acid chain; its full sequence is Glycine cleavage system H protein (131 aa).

Residues 24–106 enclose the Lipoyl-binding domain; the sequence is RAIVGVSDHA…YGEGWIMVIE (83 aa). Lys-65 is subject to N6-lipoyllysine.

The protein belongs to the GcvH family. In terms of assembly, the glycine cleavage system is composed of four proteins: P, T, L and H. (R)-lipoate is required as a cofactor.

In terms of biological role, the glycine cleavage system catalyzes the degradation of glycine. The H protein shuttles the methylamine group of glycine from the P protein to the T protein. This chain is Glycine cleavage system H protein, found in Xylella fastidiosa (strain Temecula1 / ATCC 700964).